The chain runs to 359 residues: Serpentine receptor class epsilon-26 (359 aa).

The next 7 membrane-spanning stretches (helical) occupy residues 29-49, 66-86, 127-147, 172-192, 195-215, 256-276, and 282-302; these read CAIS…VFVS, IGVP…ITIL, VAGF…LAIV, FIII…FNIL, YVLN…YYYI, LVFV…ALVL, and FFMH…FLVV.

It belongs to the nematode receptor-like protein sre family.

Its subcellular location is the membrane. This is Serpentine receptor class epsilon-26 (sre-26) from Caenorhabditis elegans.